The sequence spans 221 residues: Orotate phosphoribosyltransferase (221 aa).

5-phospho-alpha-D-ribose 1-diphosphate is bound at residue Lys-26. Orotate is bound at residue 34–35; it reads FF. Residues 72–73, Arg-98, Lys-99, Lys-102, His-104, and 123–131 each bind 5-phospho-alpha-D-ribose 1-diphosphate; these read YK and DDVISAGTS. The orotate site is built by Ser-127 and Arg-155.

Belongs to the purine/pyrimidine phosphoribosyltransferase family. PyrE subfamily. As to quaternary structure, homodimer. The cofactor is Mg(2+).

The catalysed reaction is orotidine 5'-phosphate + diphosphate = orotate + 5-phospho-alpha-D-ribose 1-diphosphate. Its pathway is pyrimidine metabolism; UMP biosynthesis via de novo pathway; UMP from orotate: step 1/2. In terms of biological role, catalyzes the transfer of a ribosyl phosphate group from 5-phosphoribose 1-diphosphate to orotate, leading to the formation of orotidine monophosphate (OMP). The sequence is that of Orotate phosphoribosyltransferase from Herminiimonas arsenicoxydans.